A 97-amino-acid polypeptide reads, in one-letter code: MAALFVRSVVASVVDLSRLAVKPRAFSILLGTLPSAKPCAEVRSLLCGGPVLSLQPSLGFKTKGVIKKRCRDCYMVKRRGRWFVLCKTNPKHKQRQM.

This sequence belongs to the bacterial ribosomal protein bL36 family. In terms of assembly, component of the mitochondrial ribosome large subunit (39S) which comprises a 16S rRNA and about 50 distinct proteins.

It localises to the mitochondrion. The chain is Large ribosomal subunit protein bL36m (Mrpl36) from Rattus norvegicus (Rat).